A 66-amino-acid chain; its full sequence is Large ribosomal subunit protein uL29 (66 aa).

Belongs to the universal ribosomal protein uL29 family.

The protein is Large ribosomal subunit protein uL29 of Thermococcus sibiricus (strain DSM 12597 / MM 739).